A 379-amino-acid chain; its full sequence is Homoserine O-succinyltransferase (379 aa).

Residues 51–360 (NAVLICHALS…DAPQGHDAFL (310 aa)) enclose the AB hydrolase-1 domain. Ser-157 acts as the Nucleophile in catalysis. Residue Arg-227 coordinates substrate. Residues Asp-323 and His-356 contribute to the active site. A substrate-binding site is contributed by Asp-357.

This sequence belongs to the AB hydrolase superfamily. MetX family. In terms of assembly, homodimer.

The protein localises to the cytoplasm. It carries out the reaction L-homoserine + succinyl-CoA = O-succinyl-L-homoserine + CoA. It functions in the pathway amino-acid biosynthesis; L-methionine biosynthesis via de novo pathway; O-succinyl-L-homoserine from L-homoserine: step 1/1. Transfers a succinyl group from succinyl-CoA to L-homoserine, forming succinyl-L-homoserine. The protein is Homoserine O-succinyltransferase of Stutzerimonas stutzeri (strain A1501) (Pseudomonas stutzeri).